The sequence spans 479 residues: ATP-dependent protease ATPase subunit HslU (479 aa).

ATP is bound by residues isoleucine 32, 74 to 79, aspartate 290, glutamate 355, and arginine 427; that span reads GVGKTE.

The protein belongs to the ClpX chaperone family. HslU subfamily. In terms of assembly, a double ring-shaped homohexamer of HslV is capped on each side by a ring-shaped HslU homohexamer. The assembly of the HslU/HslV complex is dependent on binding of ATP.

Its subcellular location is the cytoplasm. In terms of biological role, ATPase subunit of a proteasome-like degradation complex; this subunit has chaperone activity. The binding of ATP and its subsequent hydrolysis by HslU are essential for unfolding of protein substrates subsequently hydrolyzed by HslV. HslU recognizes the N-terminal part of its protein substrates and unfolds these before they are guided to HslV for hydrolysis. The protein is ATP-dependent protease ATPase subunit HslU of Leptospira interrogans serogroup Icterohaemorrhagiae serovar Lai (strain 56601).